Consider the following 361-residue polypeptide: Queuine tRNA-ribosyltransferase (361 aa).

Catalysis depends on D92, which acts as the Proton acceptor. Residues D92–F96, D146, Q189, and G216 contribute to the substrate site. The tract at residues G247–D253 is RNA binding. D266 functions as the Nucleophile in the catalytic mechanism. The tract at residues T271–R275 is RNA binding; important for wobble base 34 recognition. Residues C304, C306, C309, and H335 each contribute to the Zn(2+) site.

It belongs to the queuine tRNA-ribosyltransferase family. Homodimer. Within each dimer, one monomer is responsible for RNA recognition and catalysis, while the other monomer binds to the replacement base PreQ1. It depends on Zn(2+) as a cofactor.

It catalyses the reaction 7-aminomethyl-7-carbaguanine + guanosine(34) in tRNA = 7-aminomethyl-7-carbaguanosine(34) in tRNA + guanine. It participates in tRNA modification; tRNA-queuosine biosynthesis. Catalyzes the base-exchange of a guanine (G) residue with the queuine precursor 7-aminomethyl-7-deazaguanine (PreQ1) at position 34 (anticodon wobble position) in tRNAs with GU(N) anticodons (tRNA-Asp, -Asn, -His and -Tyr). Catalysis occurs through a double-displacement mechanism. The nucleophile active site attacks the C1' of nucleotide 34 to detach the guanine base from the RNA, forming a covalent enzyme-RNA intermediate. The proton acceptor active site deprotonates the incoming PreQ1, allowing a nucleophilic attack on the C1' of the ribose to form the product. After dissociation, two additional enzymatic reactions on the tRNA convert PreQ1 to queuine (Q), resulting in the hypermodified nucleoside queuosine (7-(((4,5-cis-dihydroxy-2-cyclopenten-1-yl)amino)methyl)-7-deazaguanosine). The chain is Queuine tRNA-ribosyltransferase from Rickettsia akari (strain Hartford).